We begin with the raw amino-acid sequence, 233 residues long: Bcl-2-like protein 1 (233 aa).

Residues 4–24 (SNRELVVDFLSYKLSQKGYSW) carry the BH4 motif. Residues 27–73 (FSDVEENRTEAPEETEAERETPSAINGNPSWHLADSPAVNGATGHSS) form a disordered region. At S49 the chain carries Phosphoserine; by PLK3. Phosphoserine; by CDK1 is present on S62. A BH3 motif is present at residues 86–100 (VKQALREAGDEFELR). The short motif at 129–148 (ELFRDGVNWGRIVAFFSFGG) is the BH1 element. A BH2 motif is present at residues 180–195 (PWIQENGGWDTFVDLY). Residues 210-226 (FNRWFLTGMTVAGVVLL) form a helical membrane-spanning segment.

This sequence belongs to the Bcl-2 family. Homodimer. Interacts with BAD. Interacts with PGAM5. Interacts with HEBP2. Interacts with p53/TP53 and BBC3; interaction with BBC3 disrupts the interaction with p53/TP53. Interacts with ATP5F1A and ATP5F1B; the interactions mediate the association of isoform Bcl-X(L) with the mitochondrial membrane ATP synthase F(1)F(0) ATP synthase. Interacts with VDAC1. Interacts with BCL2L11 (via BH3). Interacts with RNF183. Interacts with GIMAP3/IAN4 and GIMAP5/IAN5. Interacts with GIMAP5 and HSPA8/HSC70; the interaction between HSPA8 and BCL2L1 is impaired in the absence of GIMAP5. Interacts with isoform 4 of CLU; this interaction releases and activates BAX and promotes cell death. As to quaternary structure, forms heterodimers with BAX, BAK or BCL2; heterodimerization with BAX does not seem to be required for anti-apoptotic activity. Interacts with isoform 1 of SIVA1; the interaction inhibits the anti-apoptotic activity. Interacts with IKZF3. Interacts with RTL10/BOP. Interacts with DNM1L and CLTA; DNM1L and BCL2L1 isoform BCL-X(L) may form a complex in synaptic vesicles that also contains clathrin and MFF. Interacts (via the loop between motifs BH4 and BH3) with NLRP1 (via LRR repeats), but not with NLRP2, NLRP3, NLRP4, PYCARD, nor MEFV. Interacts with BECN1. In terms of processing, proteolytically cleaved by caspases during apoptosis. The cleaved protein, lacking the BH4 motif, has pro-apoptotic activity. Phosphorylated on Ser-62 by CDK1. This phosphorylation is partial in normal mitotic cells, but complete in G2-arrested cells upon DNA-damage, thus promoting subsequent apoptosis probably by triggering caspases-mediated proteolysis. Phosphorylated by PLK3, leading to regulate the G2 checkpoint and progression to cytokinesis during mitosis. Phosphorylation at Ser-49 appears during the S phase and G2, disappears rapidly in early mitosis during prometaphase, metaphase and early anaphase, and re-appears during telophase and cytokinesis. Post-translationally, ubiquitinated by RNF183 during prolonged ER stress, leading to degradation by the proteosome. In terms of tissue distribution, widely expressed, with highest levels in the brain, thymus, bone marrow, and kidney. Bcl-X(L) and Bcl-X(delta-TM) expression is enhanced in B- and T-lymphocytes that have been activated.

The protein localises to the mitochondrion membrane. The protein resides in the nucleus membrane. It localises to the cytoplasm. Its subcellular location is the cytoskeleton. It is found in the microtubule organizing center. The protein localises to the centrosome. The protein resides in the mitochondrion inner membrane. It localises to the mitochondrion outer membrane. Its subcellular location is the mitochondrion matrix. It is found in the cytoplasmic vesicle. The protein localises to the secretory vesicle. The protein resides in the synaptic vesicle membrane. It localises to the cytosol. Its function is as follows. Potent inhibitor of cell death. Inhibits activation of caspases. Appears to regulate cell death by blocking the voltage-dependent anion channel (VDAC) by binding to it and preventing the release of the caspase activator, CYC1, from the mitochondrial membrane. Also acts as a regulator of G2 checkpoint and progression to cytokinesis during mitosis. Functionally, isoform Bcl-X(L) also regulates presynaptic plasticity, including neurotransmitter release and recovery, number of axonal mitochondria as well as size and number of synaptic vesicle clusters. During synaptic stimulation, increases ATP availability from mitochondria through regulation of mitochondrial membrane ATP synthase F(1)F(0) activity and regulates endocytic vesicle retrieval in hippocampal neurons through association with DMN1L and stimulation of its GTPase activity in synaptic vesicles. May attenuate inflammation impairing NLRP1-inflammasome activation, hence CASP1 activation and IL1B release. Isoform Bcl-X(S) promotes apoptosis. This Mus musculus (Mouse) protein is Bcl-2-like protein 1 (Bcl2l1).